The sequence spans 471 residues: (13S,14R)-1,13-dihydroxy-N-methylcanadine 13-O-acetyltransferase AT1 (471 aa).

The protein belongs to the plant acyltransferase family.

The catalysed reaction is (13S,14R)-1,13-dihydroxy-N-methylcanadine + acetyl-CoA = (13S,14R)-13-O-acetyl-1-hydroxy-N-methylcanadine + CoA. Its pathway is alkaloid biosynthesis. Its function is as follows. Acetyltransferase involved in the biosynthesis of the benzylisoquinoline alkaloid noscapine. Converts (13S,14R)-1,13-dihydroxy-N-methylcanadine to (13S,14R)-13-O-acetyl-1-hydroxy-N-methylcanadine. The chain is (13S,14R)-1,13-dihydroxy-N-methylcanadine 13-O-acetyltransferase AT1 from Papaver somniferum (Opium poppy).